The primary structure comprises 536 residues: Plasmepsin V (536 aa).

Residues 1–34 (MVGASLGPPGRGSLSRLIRLVICVLTLCALSVQG) form the signal peptide. Residues 35-492 (RSESTEGHSK…RKDNIFLKIP (458 aa)) are Lumenal-facing. The Peptidase A1 domain maps to 62-462 (YFLDIDIGTP…DIQKNRIGFV (401 aa)). D80 is a catalytic residue. 7 disulfide bridges follow: C90–C172, C93–C96, C117–C128, C122–C133, C220–C466, C337–C382, and C391–C427. Residues 244–258 (SKSVSGQGSGPVSES) are compositionally biased toward low complexity. The tract at residues 244 to 264 (SKSVSGQGSGPVSESLSESGE) is disordered. D313 is a catalytic residue. The chain crosses the membrane as a helical span at residues 493-513 (FFYLYSLFVVFALSVLLSLVF). Over 514–536 (YVRRLYHMEYSPLPSEGKAPADA) the chain is Cytoplasmic.

The protein belongs to the peptidase A1 family. Component of a complex composed of SPC25 and PMV; the interaction is mediated via the transmembrane domains. The complex interacts with the SEC61 channel-forming translocon complex and is involved in the recognition and import of PEXEL motif-containing proteins into the ER for subsequent export. Post-translationally, it is not clear if the zymogen has a cleavable propeptide. Cleavage of the putative propeptide is dispensable for catalytic activity.

The protein resides in the endoplasmic reticulum membrane. Inhibited by peptidomimetic inhibitors such as WEHI-842. During the asexual blood stage, plays an essential role in the export of several proteins into the host erythrocytes by cleaving the pentameric localization motif RxLxE/Q/D (termed Plasmodium export element (PEXEL)) located downstream of the N-terminal secretory signal sequence. Specifically, cleaves after the leucine residue in the RxLxE/Q/D (or RxLxxE) motif of exported proteins including EMP1. Also, by regulating protein export, plays an essential role in gametocyte development and thus parasite transmission to the mosquito vector. This Plasmodium vivax (strain Salvador I) protein is Plasmepsin V.